A 122-amino-acid chain; its full sequence is Large ribosomal subunit protein uL14 (122 aa).

The protein belongs to the universal ribosomal protein uL14 family. Part of the 50S ribosomal subunit. Forms a cluster with proteins L3 and L19. In the 70S ribosome, L14 and L19 interact and together make contacts with the 16S rRNA in bridges B5 and B8.

Binds to 23S rRNA. Forms part of two intersubunit bridges in the 70S ribosome. This is Large ribosomal subunit protein uL14 from Chlorobaculum parvum (strain DSM 263 / NCIMB 8327) (Chlorobium vibrioforme subsp. thiosulfatophilum).